A 173-amino-acid chain; its full sequence is Crossover junction endodeoxyribonuclease RuvC (173 aa).

Catalysis depends on residues Asp-8, Glu-67, and Asp-139. Mg(2+)-binding residues include Asp-8, Glu-67, and Asp-139.

The protein belongs to the RuvC family. As to quaternary structure, homodimer which binds Holliday junction (HJ) DNA. The HJ becomes 2-fold symmetrical on binding to RuvC with unstacked arms; it has a different conformation from HJ DNA in complex with RuvA. In the full resolvosome a probable DNA-RuvA(4)-RuvB(12)-RuvC(2) complex forms which resolves the HJ. The cofactor is Mg(2+).

It localises to the cytoplasm. It carries out the reaction Endonucleolytic cleavage at a junction such as a reciprocal single-stranded crossover between two homologous DNA duplexes (Holliday junction).. Functionally, the RuvA-RuvB-RuvC complex processes Holliday junction (HJ) DNA during genetic recombination and DNA repair. Endonuclease that resolves HJ intermediates. Cleaves cruciform DNA by making single-stranded nicks across the HJ at symmetrical positions within the homologous arms, yielding a 5'-phosphate and a 3'-hydroxyl group; requires a central core of homology in the junction. The consensus cleavage sequence is 5'-(A/T)TT(C/G)-3'. Cleavage occurs on the 3'-side of the TT dinucleotide at the point of strand exchange. HJ branch migration catalyzed by RuvA-RuvB allows RuvC to scan DNA until it finds its consensus sequence, where it cleaves and resolves the cruciform DNA. The chain is Crossover junction endodeoxyribonuclease RuvC from Klebsiella pneumoniae subsp. pneumoniae (strain ATCC 700721 / MGH 78578).